Consider the following 311-residue polypeptide: Replication initiation protein (311 aa).

This sequence belongs to the plasmid replication initiation factor family.

This protein is probably a specific topoisomerase involved in initiating replication. This protein is specifically required and may be rate-limiting for replication of the plasmid in vivo. The sequence is that of Replication initiation protein (repD) from Staphylococcus aureus.